Reading from the N-terminus, the 468-residue chain is Nuclear receptor ROR-alpha A (468 aa).

Residues 15–90 (IIPCKICGDK…VGMSRDAVKF (76 aa)) constitute a DNA-binding region (nuclear receptor). 2 consecutive NR C4-type zinc fingers follow at residues 18 to 38 (CKIC…CEGC) and 54 to 73 (CPRQ…CQHC). Disordered stretches follow at residues 101–129 (LYAE…PLTP) and 142–163 (HDDL…DSGV). The region spanning 217–455 (ELEHLAQNIS…AHFPPLYKEL (239 aa)) is the NR LBD domain. The interval 444–455 (VRAHFPPLYKEL) is AF-2.

Belongs to the nuclear hormone receptor family. NR1 subfamily. Expressed in the brain, in cerebellar-like structures, including Purkinje cells.

The protein resides in the nucleus. Functionally, nuclear receptor that binds DNA as a monomer to ROR response elements (RORE). Required for proper cerebellum development. This chain is Nuclear receptor ROR-alpha A (roraa), found in Danio rerio (Zebrafish).